The sequence spans 61 residues: [Thr6, Val10, Asp11]-phyllokinin (61 aa).

An N-terminal signal peptide occupies residues 1–22 (MSFLKKSLFLVLFLGLVSFSIC). The propeptide occupies 23-50 (EEEKRETEEEENEDEMNEESEEKRESPE). The interval 24-61 (EEKRETEEEENEDEMNEESEEKRESPERPPGFTPFRVD) is disordered. Positions 30–42 (EEEENEDEMNEES) are enriched in acidic residues.

It belongs to the frog skin active peptide (FSAP) family. Bradykinin-related peptide subfamily. In terms of tissue distribution, expressed by the skin glands.

It is found in the secreted. In terms of biological role, induces relaxation of rat smooth muscle from tail artery and contraction of that from ileum, urinary bladder and uterus. Binds to both bradykinin receptor B1 (BDKRB1) and B2 (BDKRB2). The sequence is that of [Thr6, Val10, Asp11]-phyllokinin from Agalychnis spurrelli (Gliding leaf frog).